Here is a 208-residue protein sequence, read N- to C-terminus: Proteasome subunit beta 2 (208 aa).

A propeptide spans 1-9 (removed in mature form; by autocatalysis); it reads MSGKKIVSK. Threonine 10 acts as the Nucleophile in catalysis.

Belongs to the peptidase T1B family. As to quaternary structure, the 20S proteasome core is composed of 14 alpha and 14 beta subunits that assemble into four stacked heptameric rings, resulting in a barrel-shaped structure. The two inner rings, each composed of seven catalytic beta subunits, are sandwiched by two outer rings, each composed of seven alpha subunits. The catalytic chamber with the active sites is on the inside of the barrel. Has a gated structure, the ends of the cylinder being occluded by the N-termini of the alpha-subunits. Is capped at one or both ends by the proteasome regulatory ATPase, PAN.

The protein resides in the cytoplasm. It catalyses the reaction Cleavage of peptide bonds with very broad specificity.. Its activity is regulated as follows. The formation of the proteasomal ATPase PAN-20S proteasome complex, via the docking of the C-termini of PAN into the intersubunit pockets in the alpha-rings, triggers opening of the gate for substrate entry. Interconversion between the open-gate and close-gate conformations leads to a dynamic regulation of the 20S proteasome proteolysis activity. Its function is as follows. Component of the proteasome core, a large protease complex with broad specificity involved in protein degradation. In Staphylothermus marinus (strain ATCC 43588 / DSM 3639 / JCM 9404 / F1), this protein is Proteasome subunit beta 2.